The primary structure comprises 226 residues: Neuron-specific vesicular protein calcyon (226 aa).

Residues 1–21 (MVKLGCSFSGKPGKEAGDQDG) are disordered. The Extracellular portion of the chain corresponds to 1–88 (MVKLGCSFSG…EEGRRLPTAR (88 aa)). A helical membrane pass occupies residues 89–109 (MIAFAMALLGCVLIMYKAIWY). Topologically, residues 110-226 (DQFTCPDGFL…AEGVPSQPPK (117 aa)) are cytoplasmic. The disordered stretch occupies residues 177–226 (HKGTTPAAMAVSTAAAAAAAEGTEPSGKSLDTREKEDPQKAEGVPSQPPK). Positions 183–196 (AAMAVSTAAAAAAA) are enriched in low complexity. The segment covering 206-216 (LDTREKEDPQK) has biased composition (basic and acidic residues).

It belongs to the NSG family. Interacts with CLTA. In terms of tissue distribution, most abundant in brain. Also expressed in testis and ovary and, at much lower levels, in kidney and heart.

Its subcellular location is the cytoplasmic vesicle membrane. The protein localises to the cell membrane. In terms of biological role, interacts with clathrin light chain A and stimulates clathrin self-assembly and clathrin-mediated endocytosis. The protein is Neuron-specific vesicular protein calcyon (Caly) of Mus musculus (Mouse).